The chain runs to 161 residues: RNA pyrophosphohydrolase (161 aa).

A Nudix hydrolase domain is found at 9–155 (PYRPCVGVML…KRRVYRQVVD (147 aa)). Positions 44 to 65 (GGIDDGEELHPAALRELSEETG) match the Nudix box motif.

It belongs to the Nudix hydrolase family. RppH subfamily. It depends on a divalent metal cation as a cofactor.

Functionally, accelerates the degradation of transcripts by removing pyrophosphate from the 5'-end of triphosphorylated RNA, leading to a more labile monophosphorylated state that can stimulate subsequent ribonuclease cleavage. This chain is RNA pyrophosphohydrolase, found in Novosphingobium aromaticivorans (strain ATCC 700278 / DSM 12444 / CCUG 56034 / CIP 105152 / NBRC 16084 / F199).